The primary structure comprises 462 residues: Cysteine--tRNA ligase (462 aa).

Cys28 lines the Zn(2+) pocket. The short motif at 30 to 40 (VTIYDLCHIGH) is the 'HIGH' region element. Cys211, His236, and Glu240 together coordinate Zn(2+). Residues 268 to 272 (KMSKS) carry the 'KMSKS' region motif. Residue Lys271 participates in ATP binding.

The protein belongs to the class-I aminoacyl-tRNA synthetase family. As to quaternary structure, monomer. The cofactor is Zn(2+).

The protein localises to the cytoplasm. The enzyme catalyses tRNA(Cys) + L-cysteine + ATP = L-cysteinyl-tRNA(Cys) + AMP + diphosphate. The sequence is that of Cysteine--tRNA ligase from Aliivibrio salmonicida (strain LFI1238) (Vibrio salmonicida (strain LFI1238)).